Here is a 496-residue protein sequence, read N- to C-terminus: Docking protein 3 (496 aa).

The disordered stretch occupies residues 18 to 38; that stretch reads LSLDGGTGSGQKGKCEEFPSS. In terms of domain architecture, PH spans 63–179; that stretch reads PIKDGILYQQ…WMGPICQLAF (117 aa). Ser-194 carries the post-translational modification Phosphoserine. The IRS-type PTB domain maps to 213 to 317; that stretch reads EVGEFPVVVQ…ARQRERLPEL (105 aa). Positions 313 to 363 are disordered; the sequence is RLPELTRPQPCPLPRATSLPSLDTPGELREMPPGPEPPTSRKMHLAEPGPQ. 2 positions are modified to phosphoserine: Ser-330 and Ser-364. Position 381 is a phosphotyrosine (Tyr-381). Positions 408–447 are disordered; that stretch reads PTLHGGEPEPHEGPGSRSPTTSPIYHNGQDLSWPGPANDS. The residue at position 425 (Ser-425) is a Phosphoserine.

The protein belongs to the DOK family. Type A subfamily. On tyrosine phosphorylation, interacts with CSK and INPP5D/SHIP1 via their SH2 domains. Both Tyr-381 and Tyr-398 are required for interaction with INPP5D. Only Tyr-381 is required for interaction with CSK. Binds ABL1 through the PTB domain and in a kinase-dependent manner. Does not interact with RasGAP. Post-translationally, constitutively tyrosine-phosphorylated. On IL2 stimulation, phosphorylated on C-terminal tyrosine residues possibly by Src kinases. Can also be phosphorylated by ABL1 kinase. Expressed in spleen.

It localises to the cytoplasm. Its subcellular location is the cell membrane. Functionally, DOK proteins are enzymatically inert adaptor or scaffolding proteins. They provide a docking platform for the assembly of multimolecular signaling complexes. DOK3 is a negative regulator of JNK signaling in B-cells through interaction with INPP5D/SHIP1. May modulate ABL1 function. The polypeptide is Docking protein 3 (DOK3) (Homo sapiens (Human)).